A 955-amino-acid chain; its full sequence is Kinesin-like protein NACK2 (955 aa).

The region spanning 36–357 (KILVTIRVRP…LCFATSAKEV (322 aa)) is the Kinesin motor domain. ATP is bound at residue 120-127 (GQTSSGKT). 2 coiled-coil regions span residues 366–443 (VVAE…LKGS) and 566–604 (KASL…VMHL).

The protein belongs to the TRAFAC class myosin-kinesin ATPase superfamily. Kinesin family. KIN-7 subfamily.

It is found in the cytoplasm. Its subcellular location is the nucleus. The protein resides in the cytoskeleton. The protein localises to the phragmoplast. Probable plus end-directed motor protein that may function in the NACK-PQR (NPK1-NQK1/MEK1-NRK1) MAP kinase signaling pathway, which is essential for somatic cell cytokinesis, especially for the cell-plate formation and its expansion. May regulate the activity and the localization of NPK1, probably by association through the non-catalytic region of the kinase. The chain is Kinesin-like protein NACK2 (NACK2) from Nicotiana tabacum (Common tobacco).